Reading from the N-terminus, the 563-residue chain is BOS complex subunit NCLN (563 aa).

The N-terminal stretch at 1-42 (MLEEAGEVLENMLKASCLPLGFIVFLPAVLLLVAPPLPAADA) is a signal peptide. Residues 43–522 (AHEFTVYRMQ…VMNAYRVKPA (480 aa)) lie on the Lumenal side of the membrane. N-linked (GlcNAc...) asparagine glycosylation is found at asparagine 241 and asparagine 428. Residues 523 to 543 (VFDLLLAVGIAAYLGMAYVAV) traverse the membrane as a helical segment. The Cytoplasmic portion of the chain corresponds to 544–563 (QHFSLLYKTVQRLLVKAKTQ).

The protein belongs to the nicastrin family. As to quaternary structure, component of the back of Sec61 (BOS) complex, composed of NCLN/Nicalin, NOMO (NOMO1, NOMO2 or NOMO3) and TMEM147. The BOS complex is part of the multi-pass translocon (MPT) complex, composed of three subcomplexes, the GEL complex (composed of RAB5IF/OPTI and TMCO1), the BOS complex (composed of NCLN/Nicalin, NOMO and TMEM147) and the PAT complex (composed of WDR83OS/Asterix and CCDC47). The MPT complex associates with the SEC61 complex. In terms of tissue distribution, highly expressed in pancreas and skeletal muscle and, at lower levels, in heart.

It localises to the endoplasmic reticulum membrane. In terms of biological role, component of the multi-pass translocon (MPT) complex that mediates insertion of multi-pass membrane proteins into the lipid bilayer of membranes. The MPT complex takes over after the SEC61 complex: following membrane insertion of the first few transmembrane segments of proteins by the SEC61 complex, the MPT complex occludes the lateral gate of the SEC61 complex to promote insertion of subsequent transmembrane regions. May antagonize Nodal signaling and subsequent organization of axial structures during mesodermal patterning, via its interaction with NOMO. The sequence is that of BOS complex subunit NCLN from Homo sapiens (Human).